We begin with the raw amino-acid sequence, 236 residues long: V-set and transmembrane domain-containing protein 1 (236 aa).

The N-terminal stretch at 1 to 16 (MTAEFLSLLCLGLCLG) is a signal peptide. Over 17–135 (YEDEKKNEKP…APSMKTDTRT (119 aa)) the chain is Extracellular. Positions 27-114 (PKPSLHAWPS…EWSESSEHLQ (88 aa)) constitute an Ig-like V-type domain. N-linked (GlcNAc...) asparagine glycosylation is found at Asn44 and Asn55. Cys49 and Cys96 form a disulfide bridge. Residues 136–156 (IFVAIFSCISILLLFLSVFII) traverse the membrane as a helical segment. The Cytoplasmic portion of the chain corresponds to 157-236 (YRCSQHSSSS…GSHEYAALKV (80 aa)). The segment at 166-200 (SEESTKRTSHSKLPEQEAAEADLSNMERVSLSTAD) is disordered. 2 consecutive short sequence motifs (ITIM motif) follow at residues 204-209 (VTYAEL) and 229-234 (HEYAAL). Positions 215-236 (SEAASDTTQEPPGSHEYAALKV) are disordered.

Isoform 2 is N-glycosylated. As to expression, expressed on myeloid (neutrophils, eosinophils and monocytes) but not on lymphoid cells.

Its subcellular location is the membrane. It is found in the secreted. Its function is as follows. Behaves as a cytokine, promoting IL17A secretion by CD4+ T-cells, and differentiation and activation of IL17 producing helper T-cells (TH17). Inhibitory immune receptor involved in the regulation of phagocytes. This chain is V-set and transmembrane domain-containing protein 1 (VSTM1), found in Homo sapiens (Human).